Here is a 444-residue protein sequence, read N- to C-terminus: Bifunctional enolase 2/transcriptional activator (444 aa).

Positions 163 and 172 each coordinate substrate. Catalysis depends on Glu-215, which acts as the Proton donor. 3 residues coordinate Mg(2+): Asp-250, Glu-300, and Asp-327. Residues Glu-300 and Asp-327 each coordinate substrate. Lys-352 acts as the Proton acceptor in catalysis. Substrate contacts are provided by residues 379–382 (SHRS) and Lys-403.

This sequence belongs to the enolase family. Homodimer. The cofactor is Mg(2+).

Its subcellular location is the cytoplasm. It localises to the cytosol. It is found in the nucleus. The protein resides in the mitochondrion outer membrane. It catalyses the reaction (2R)-2-phosphoglycerate = phosphoenolpyruvate + H2O. Its pathway is carbohydrate degradation; glycolysis; pyruvate from D-glyceraldehyde 3-phosphate: step 4/5. In terms of biological role, multifunctional enzyme that acts as an enolase involved in the metabolism and as a positive regulator of cold-responsive gene transcription. Binds to the cis-element the gene promoter of STZ/ZAT10, a zinc finger transcriptional repressor. In Arabidopsis thaliana (Mouse-ear cress), this protein is Bifunctional enolase 2/transcriptional activator (ENO2).